Consider the following 72-residue polypeptide: DNA gyrase inhibitor YacG (72 aa).

4 residues coordinate Zn(2+): Cys-17, Cys-20, Cys-32, and Cys-36. The tract at residues 52-72 is disordered; sequence PGPEEDEMSYPPHSNDGNRSR.

The protein belongs to the DNA gyrase inhibitor YacG family. Interacts with GyrB. The cofactor is Zn(2+).

In terms of biological role, inhibits all the catalytic activities of DNA gyrase by preventing its interaction with DNA. Acts by binding directly to the C-terminal domain of GyrB, which probably disrupts DNA binding by the gyrase. In Methylorubrum extorquens (strain CM4 / NCIMB 13688) (Methylobacterium extorquens), this protein is DNA gyrase inhibitor YacG.